Here is a 387-residue protein sequence, read N- to C-terminus: ATP phosphoribosyltransferase regulatory subunit (387 aa).

This sequence belongs to the class-II aminoacyl-tRNA synthetase family. HisZ subfamily. In terms of assembly, heteromultimer composed of HisG and HisZ subunits.

It is found in the cytoplasm. The protein operates within amino-acid biosynthesis; L-histidine biosynthesis; L-histidine from 5-phospho-alpha-D-ribose 1-diphosphate: step 1/9. Required for the first step of histidine biosynthesis. May allow the feedback regulation of ATP phosphoribosyltransferase activity by histidine. In Polynucleobacter necessarius subsp. necessarius (strain STIR1), this protein is ATP phosphoribosyltransferase regulatory subunit.